We begin with the raw amino-acid sequence, 157 residues long: Succinate dehydrogenase assembly factor 2-B, mitochondrial (157 aa).

A mitochondrion-targeting transit peptide spans 1-22 (MLSQWFRGRHLVVRSALFSRRR).

It belongs to the SDHAF2 family. As to quaternary structure, interacts with the flavoprotein subunit within the SDH catalytic dimer.

The protein localises to the mitochondrion matrix. In terms of biological role, plays an essential role in the assembly of succinate dehydrogenase (SDH), an enzyme complex (also referred to as respiratory complex II) that is a component of both the tricarboxylic acid (TCA) cycle and the mitochondrial electron transport chain, and which couples the oxidation of succinate to fumarate with the reduction of ubiquinone (coenzyme Q) to ubiquinol. Required for flavinylation (covalent attachment of FAD) of the flavoprotein subunit of the SDH catalytic dimer. The protein is Succinate dehydrogenase assembly factor 2-B, mitochondrial of Drosophila mojavensis (Fruit fly).